The sequence spans 171 residues: CASP-like protein 1C3 (171 aa).

The Cytoplasmic portion of the chain corresponds to 1-6; the sequence is MVKPKR. A helical transmembrane segment spans residues 7-27; it reads LLSLLLRLIAFGATLAAVIIM. The Extracellular portion of the chain corresponds to 28-52; the sequence is ATSHEKGSFFALSYEAKYSDTPAFK. A helical transmembrane segment spans residues 53 to 73; it reads YFVIANAIVTVYGFLALFIPS. Topologically, residues 74–79 are cytoplasmic; it reads ESPLWR. The helical transmembrane segment at 80-100 threads the bilayer; sequence LVLALDLVFTMLLISSISAAL. The Extracellular portion of the chain corresponds to 101 to 130; it reads AVAQVGKKGNSSAGWLPVCGQVTKYCNQVT. N-linked (GlcNAc...) asparagine glycosylation occurs at N110. The chain crosses the membrane as a helical span at residues 131–151; the sequence is GALVAGFIAIITYIILLLYSI. The Cytoplasmic portion of the chain corresponds to 152 to 171; the sequence is YTFLNSLLGKTPCRLSSPGI.

This sequence belongs to the Casparian strip membrane proteins (CASP) family. In terms of assembly, homodimer and heterodimers.

The protein resides in the cell membrane. The polypeptide is CASP-like protein 1C3 (Populus trichocarpa (Western balsam poplar)).